Here is a 133-residue protein sequence, read N- to C-terminus: Large ribosomal subunit protein uL22 (133 aa).

It belongs to the universal ribosomal protein uL22 family. Part of the 50S ribosomal subunit.

Functionally, this protein binds specifically to 23S rRNA; its binding is stimulated by other ribosomal proteins, e.g. L4, L17, and L20. It is important during the early stages of 50S assembly. It makes multiple contacts with different domains of the 23S rRNA in the assembled 50S subunit and ribosome. The globular domain of the protein is located near the polypeptide exit tunnel on the outside of the subunit, while an extended beta-hairpin is found that lines the wall of the exit tunnel in the center of the 70S ribosome. This is Large ribosomal subunit protein uL22 from Borrelia garinii subsp. bavariensis (strain ATCC BAA-2496 / DSM 23469 / PBi) (Borreliella bavariensis).